The chain runs to 565 residues: Thiol:disulfide interchange protein DsbD (565 aa).

Residues 1–19 (MAQRIFTLILLLCSTSVFA) form the signal peptide. 2 cysteine pairs are disulfide-bonded: C122-C128 and C182-C304. Helical transmembrane passes span 163–183 (LPFS…TPCV), 208–228 (LLTF…GLVV), 243–263 (YVLI…FGLF), 296–316 (IAGL…LLYI), 323–343 (WLGG…LMLI), 357–377 (WMEQ…VFLL), and 384–404 (VWGL…AFIT). Residues 434–565 (WAFGATHTAQ…FSAHLRDRQP (132 aa)) form the Thioredoxin domain. C480 and C483 are joined by a disulfide.

Belongs to the thioredoxin family. DsbD subfamily.

It is found in the cell inner membrane. The enzyme catalyses [protein]-dithiol + NAD(+) = [protein]-disulfide + NADH + H(+). It carries out the reaction [protein]-dithiol + NADP(+) = [protein]-disulfide + NADPH + H(+). Its function is as follows. Required to facilitate the formation of correct disulfide bonds in some periplasmic proteins and for the assembly of the periplasmic c-type cytochromes. Acts by transferring electrons from cytoplasmic thioredoxin to the periplasm. This transfer involves a cascade of disulfide bond formation and reduction steps. In Shigella boydii serotype 4 (strain Sb227), this protein is Thiol:disulfide interchange protein DsbD.